Here is a 156-residue protein sequence, read N- to C-terminus: Arginine repressor (156 aa).

This sequence belongs to the ArgR family.

The protein resides in the cytoplasm. It functions in the pathway amino-acid biosynthesis; L-arginine biosynthesis [regulation]. Regulates arginine biosynthesis genes. The polypeptide is Arginine repressor (Salmonella paratyphi C (strain RKS4594)).